We begin with the raw amino-acid sequence, 872 residues long: DNA mismatch repair protein MutS (872 aa).

An ATP-binding site is contributed by 626-633; it reads GPNMAGKS.

The protein belongs to the DNA mismatch repair MutS family.

Its function is as follows. This protein is involved in the repair of mismatches in DNA. It is possible that it carries out the mismatch recognition step. This protein has a weak ATPase activity. This is DNA mismatch repair protein MutS from Chlorobium phaeobacteroides (strain DSM 266 / SMG 266 / 2430).